Consider the following 385-residue polypeptide: Glucans biosynthesis protein C (385 aa).

Transmembrane regions (helical) follow at residues 17 to 37, 60 to 80, 91 to 111, 137 to 157, 173 to 193, 212 to 232, 239 to 259, 274 to 294, 311 to 331, and 338 to 358; these read AWLM…SHTW, MQVF…RYPL, VGIP…IMLQ, ISHL…VWIF, KFSM…YAVI, FIVM…LAFI, LFTT…VAYL, TESV…FSFG, ASLF…AYIT, and WLGF…LYEI.

The protein belongs to the acyltransferase 3 family. OpgC subfamily.

The protein localises to the cell membrane. It participates in glycan metabolism; osmoregulated periplasmic glucan (OPG) biosynthesis. In terms of biological role, necessary for the succinyl substitution of periplasmic glucans. Could catalyze the transfer of succinyl residues from the cytoplasmic side of the membrane to the nascent glucan backbones on the periplasmic side of the membrane. In Escherichia coli O139:H28 (strain E24377A / ETEC), this protein is Glucans biosynthesis protein C.